The chain runs to 296 residues: 2-methylisocitrate lyase (296 aa).

Position 45–47 (45–47 (SGG)) interacts with substrate. Mg(2+)-binding residues include D85 and D87. Substrate is bound by residues 123 to 124 (CG), R158, E188, 210 to 212 (NIT), R241, and R270.

The protein belongs to the isocitrate lyase/PEP mutase superfamily. Methylisocitrate lyase family. Homotetramer; dimer of dimers. It depends on Mg(2+) as a cofactor.

The catalysed reaction is (2S,3R)-3-hydroxybutane-1,2,3-tricarboxylate = pyruvate + succinate. Its pathway is organic acid metabolism; propanoate degradation. In terms of biological role, involved in the catabolism of short chain fatty acids (SCFA) via the 2-methylcitrate cycle I (propionate degradation route). Catalyzes the thermodynamically favored C-C bond cleavage of (2R,3S)-2-methylisocitrate to yield pyruvate and succinate via an alpha-carboxy-carbanion intermediate. In Escherichia coli (strain K12), this protein is 2-methylisocitrate lyase.